The primary structure comprises 429 residues: Phosphoribosylamine--glycine ligase (429 aa).

The ATP-grasp domain occupies 109 to 316 (KDFLARHQIP…LVELCLAAID (208 aa)). 135–196 (VREQGAPIVV…EEFLDGEEAS (62 aa)) is an ATP binding site. Positions 212-234 (SQDHKRVGDKDTGPNTGGMGAYS) are disordered. Positions 213-223 (QDHKRVGDKDT) are enriched in basic and acidic residues. 2 residues coordinate Mg(2+): glutamate 286 and asparagine 288.

It belongs to the GARS family. Mg(2+) is required as a cofactor. Mn(2+) serves as cofactor.

It catalyses the reaction 5-phospho-beta-D-ribosylamine + glycine + ATP = N(1)-(5-phospho-beta-D-ribosyl)glycinamide + ADP + phosphate + H(+). It participates in purine metabolism; IMP biosynthesis via de novo pathway; N(1)-(5-phospho-D-ribosyl)glycinamide from 5-phospho-alpha-D-ribose 1-diphosphate: step 2/2. The polypeptide is Phosphoribosylamine--glycine ligase (Vibrio vulnificus (strain YJ016)).